The primary structure comprises 86 residues: Large ribosomal subunit protein bL31B (86 aa).

Belongs to the bacterial ribosomal protein bL31 family. Type B subfamily. In terms of assembly, part of the 50S ribosomal subunit.

The polypeptide is Large ribosomal subunit protein bL31B (Streptococcus agalactiae serotype III (strain NEM316)).